A 436-amino-acid polypeptide reads, in one-letter code: Indole-3-acetyl-aspartic acid hydrolase (436 aa).

Belongs to the peptidase M20 family. Monomer.

It carries out the reaction (indol-3-yl)acetyl-L-aspartate + H2O = (indol-3-yl)acetate + L-aspartate. Hydrolyzes indole-3-acetyl-aspartate (IAA-Asp) to indole-3-acetic acid (IAA). Shows an exclusively high substrate specificity for IAA-Asp. In Enterobacter agglomerans (Erwinia herbicola), this protein is Indole-3-acetyl-aspartic acid hydrolase.